The sequence spans 30 residues: Cyclotide mech-1 (30 aa).

A cross-link (cyclopeptide (Gly-Asp)) is located at residues 1 to 30 (GVIPCGESCVFIPCINKKKCSCKNKVCYRD). 3 disulfide bridges follow: Cys-5–Cys-20, Cys-9–Cys-22, and Cys-14–Cys-27.

In terms of processing, this is a cyclic peptide. Contains 3 disulfide bonds.

Probably participates in a plant defense mechanism (Potential). Binds to and induces leakage in phospholipd membranes, particularly ones containing 1-palmitoyl-2-oleophosphatidylethanolamine (POPE). Not active against Gram-negative bacterium E.coli ATCC 25922 or Gram-positive bacterium S.aureus ATCC 25923 up to a concentration of 64 uM. This chain is Cyclotide mech-1, found in Melicytus chathamicus (Chatham Island mahoe).